Reading from the N-terminus, the 173-residue chain is NADH-ubiquinone oxidoreductase chain 6 (173 aa).

A run of 5 helical transmembrane segments spans residues 1-21 (MTYF…AVAS), 27-47 (YGVV…LSLG), 48-68 (VSFV…VVFV), 87-107 (VVGY…VGGL), and 139-159 (CGVG…FVVL).

Belongs to the complex I subunit 6 family.

It localises to the mitochondrion membrane. It catalyses the reaction a ubiquinone + NADH + 5 H(+)(in) = a ubiquinol + NAD(+) + 4 H(+)(out). Core subunit of the mitochondrial membrane respiratory chain NADH dehydrogenase (Complex I) that is believed to belong to the minimal assembly required for catalysis. Complex I functions in the transfer of electrons from NADH to the respiratory chain. The immediate electron acceptor for the enzyme is believed to be ubiquinone. This chain is NADH-ubiquinone oxidoreductase chain 6 (MT-ND6), found in Synthliboramphus wumizusume (Japanese murrelet).